The chain runs to 579 residues: Arginine--tRNA ligase (579 aa).

The 'HIGH' region motif lies at 127–137 (PNLAKEMHVGH).

The protein belongs to the class-I aminoacyl-tRNA synthetase family. As to quaternary structure, monomer.

The protein localises to the cytoplasm. It carries out the reaction tRNA(Arg) + L-arginine + ATP = L-arginyl-tRNA(Arg) + AMP + diphosphate. This chain is Arginine--tRNA ligase, found in Ectopseudomonas mendocina (strain ymp) (Pseudomonas mendocina).